The chain runs to 362 residues: Adenosine deaminase (362 aa).

Zn(2+)-binding residues include His19 and His21. The substrate site is built by His21, Asp23, and Gly181. Residue His208 coordinates Zn(2+). The active-site Proton donor is the Glu211. Asp300 lines the Zn(2+) pocket.

Belongs to the metallo-dependent hydrolases superfamily. Adenosine and AMP deaminases family. Adenosine deaminase subfamily. Zn(2+) is required as a cofactor.

It carries out the reaction adenosine + H2O + H(+) = inosine + NH4(+). The enzyme catalyses 2'-deoxyadenosine + H2O + H(+) = 2'-deoxyinosine + NH4(+). Catalyzes the hydrolytic deamination of adenosine and 2-deoxyadenosine. In Mycobacterium sp. (strain MCS), this protein is Adenosine deaminase.